Reading from the N-terminus, the 125-residue chain is Ribonuclease P protein component (125 aa).

This sequence belongs to the RnpA family. Consists of a catalytic RNA component (M1 or rnpB) and a protein subunit.

The enzyme catalyses Endonucleolytic cleavage of RNA, removing 5'-extranucleotides from tRNA precursor.. In terms of biological role, RNaseP catalyzes the removal of the 5'-leader sequence from pre-tRNA to produce the mature 5'-terminus. It can also cleave other RNA substrates such as 4.5S RNA. The protein component plays an auxiliary but essential role in vivo by binding to the 5'-leader sequence and broadening the substrate specificity of the ribozyme. The polypeptide is Ribonuclease P protein component (Clostridium beijerinckii (strain ATCC 51743 / NCIMB 8052) (Clostridium acetobutylicum)).